A 129-amino-acid polypeptide reads, in one-letter code: Large ribosomal subunit protein bL17 (129 aa).

The protein belongs to the bacterial ribosomal protein bL17 family. Part of the 50S ribosomal subunit. Contacts protein L32.

This Acidovorax ebreus (strain TPSY) (Diaphorobacter sp. (strain TPSY)) protein is Large ribosomal subunit protein bL17.